Here is a 61-residue protein sequence, read N- to C-terminus: Small ribosomal subunit protein uS14B (61 aa).

Positions 24, 27, 40, and 43 each coordinate Zn(2+).

Belongs to the universal ribosomal protein uS14 family. Zinc-binding uS14 subfamily. In terms of assembly, part of the 30S ribosomal subunit. Contacts proteins S3 and S10. Requires Zn(2+) as cofactor.

Functionally, binds 16S rRNA, required for the assembly of 30S particles and may also be responsible for determining the conformation of the 16S rRNA at the A site. This is Small ribosomal subunit protein uS14B from Streptococcus agalactiae serotype Ia (strain ATCC 27591 / A909 / CDC SS700).